A 345-amino-acid polypeptide reads, in one-letter code: Platelet-derived growth factor C (345 aa).

The first 22 residues, 1–22, serve as a signal peptide directing secretion; sequence MLLLGLLLLTSALAGRRHGAAA. The 118-residue stretch at 46–163 folds into the CUB domain; the sequence is HEKIITVTSN…PGFCIHYTLL (118 aa). N-linked (GlcNAc...) asparagine glycosylation occurs at Asn55. 4 disulfide bridges follow: Cys104–Cys124, Cys250–Cys294, Cys280–Cys335, and Cys287–Cys337.

It belongs to the PDGF/VEGF growth factor family. In terms of assembly, homodimer; disulfide-linked. Interacts with PDGFRA homodimers, and with heterodimers formed by PDGFRA and PDGFRB. In terms of processing, proteolytic removal of the N-terminal CUB domain releasing the core domain is necessary for unmasking the receptor-binding epitopes of the core domain. Cleavage after basic residues in the hinge region (region connecting the CUB and growth factor domains) gives rise to the receptor-binding form.

Its subcellular location is the secreted. Growth factor that plays an essential role in the regulation of embryonic development, cell proliferation, cell migration, survival and chemotaxis. Potent mitogen and chemoattractant for cells of mesenchymal origin. Required for normal skeleton formation during embryonic development. Required for normal skin morphogenesis during embryonic development. Plays an important role in wound healing, in angiogenesis and blood vessel development. This chain is Platelet-derived growth factor C (PDGFC), found in Gallus gallus (Chicken).